The chain runs to 285 residues: N(G),N(G)-dimethylarginine dimethylaminohydrolase 1 (285 aa).

An N-acetylalanine modification is found at alanine 2. Residues leucine 30, aspartate 73, 78 to 79, arginine 98, and arginine 145 contribute to the substrate site; that span reads ED. The active-site Proton donor is histidine 173. Residue cysteine 222 is modified to S-nitrosocysteine. Substrate is bound at residue valine 268. Cysteine 274 carries the post-translational modification S-nitrosocysteine. Cysteine 274 acts as the Nucleophile in catalysis. Cysteine 274 contacts Zn(2+).

The protein belongs to the DDAH family. Monomer. As to expression, detected in brain, liver, kidney and pancreas, and at low levels in skeletal muscle.

The catalysed reaction is N(omega),N(omega)-dimethyl-L-arginine + H2O = dimethylamine + L-citrulline. It carries out the reaction N(omega)-methyl-L-arginine + H2O = L-citrulline + methylamine. Its activity is regulated as follows. Inhibited by zinc ions. Enzyme purified in the absence of 1,10-phenanthroline contains on average 0.4 zinc atoms per subunit. Inhibited by 4-hydroxy-nonenal through the formation of a covalent adduct with His-173. Competitively inhibited by N(5)-iminopropyl-ornithine. Functionally, hydrolyzes N(G),N(G)-dimethyl-L-arginine (ADMA) and N(G)-monomethyl-L-arginine (MMA) which act as inhibitors of NOS. Has therefore a role in the regulation of nitric oxide generation. In Homo sapiens (Human), this protein is N(G),N(G)-dimethylarginine dimethylaminohydrolase 1.